The sequence spans 298 residues: Proton-activated chloride channel (298 aa).

Residues 1-12 are Cytoplasmic-facing; it reads MPIGFNKACLKN. The helical transmembrane segment at 13-33 threads the bilayer; that stretch reads VFTVILVLIYLALTAVAVFLA. At 34 to 245 the chain is on the extracellular side; that stretch reads YQTISDFMDK…RDPFIQQVKD (212 aa). Residues 246-266 form a helical membrane-spanning segment; sequence IVTANPWNTIAILCGVFMALF. Over 267–298 the chain is Cytoplasmic; it reads KAADFAKLSIKWMIRIRKRHIRAKMREMNQIS.

It belongs to the proton-activated chloride channel family.

The protein resides in the cell membrane. It carries out the reaction chloride(in) = chloride(out). Chloride channel gated by pH that facilitates the entry of chloride ions into cells upon exposure to extracellular acidic pH. Displays channel activity with distinct kinetic properties compared to the human ortholog channel. This Danio rerio (Zebrafish) protein is Proton-activated chloride channel.